A 169-amino-acid chain; its full sequence is Phosphopantetheine adenylyltransferase (169 aa).

Residue T14 participates in substrate binding. Residues 14–15 (TF) and H22 contribute to the ATP site. 3 residues coordinate substrate: K46, L78, and R92. ATP is bound by residues 93–95 (GLR), E103, and 128–134 (HSFISSS).

This sequence belongs to the bacterial CoaD family. Homohexamer. It depends on Mg(2+) as a cofactor.

Its subcellular location is the cytoplasm. The catalysed reaction is (R)-4'-phosphopantetheine + ATP + H(+) = 3'-dephospho-CoA + diphosphate. The protein operates within cofactor biosynthesis; coenzyme A biosynthesis; CoA from (R)-pantothenate: step 4/5. Functionally, reversibly transfers an adenylyl group from ATP to 4'-phosphopantetheine, yielding dephospho-CoA (dPCoA) and pyrophosphate. The sequence is that of Phosphopantetheine adenylyltransferase from Stenotrophomonas maltophilia (strain K279a).